We begin with the raw amino-acid sequence, 390 residues long: Chorismate synthase (390 aa).

The NADP(+) site is built by Arg39 and Arg45. FMN is bound by residues 132 to 134, 253 to 254, Gly298, 313 to 317, and Arg339; these read RSS, NA, and KPIPT.

Belongs to the chorismate synthase family. Homotetramer. FMNH2 is required as a cofactor.

The catalysed reaction is 5-O-(1-carboxyvinyl)-3-phosphoshikimate = chorismate + phosphate. Its pathway is metabolic intermediate biosynthesis; chorismate biosynthesis; chorismate from D-erythrose 4-phosphate and phosphoenolpyruvate: step 7/7. Its function is as follows. Catalyzes the anti-1,4-elimination of the C-3 phosphate and the C-6 proR hydrogen from 5-enolpyruvylshikimate-3-phosphate (EPSP) to yield chorismate, which is the branch point compound that serves as the starting substrate for the three terminal pathways of aromatic amino acid biosynthesis. This reaction introduces a second double bond into the aromatic ring system. The chain is Chorismate synthase from Bacillus cytotoxicus (strain DSM 22905 / CIP 110041 / 391-98 / NVH 391-98).